The following is a 215-amino-acid chain: LexA repressor (215 aa).

The H-T-H motif DNA-binding region spans 28 to 48 (RAEIAAELGFSSPNAAEEHLR). Catalysis depends on for autocatalytic cleavage activity residues Ser133 and Lys170.

The protein belongs to the peptidase S24 family. In terms of assembly, homodimer.

It carries out the reaction Hydrolysis of Ala-|-Gly bond in repressor LexA.. Represses a number of genes involved in the response to DNA damage (SOS response), including recA and lexA. In the presence of single-stranded DNA, RecA interacts with LexA causing an autocatalytic cleavage which disrupts the DNA-binding part of LexA, leading to derepression of the SOS regulon and eventually DNA repair. The chain is LexA repressor from Burkholderia vietnamiensis (strain G4 / LMG 22486) (Burkholderia cepacia (strain R1808)).